The following is a 264-amino-acid chain: Wtf element wtf11 (264 aa).

Over residues 1–12 (MNSNYVPLTSSV) the composition is skewed to polar residues. Positions 1–26 (MNSNYVPLTSSVDVEEKMESENGVDL) are disordered. Helical transmembrane passes span 107–127 (LLFV…VIFG), 145–165 (LSWF…YDFW), 180–200 (WKNT…GFFV), and 217–237 (SLFA…FETL).

This sequence belongs to the WTF family.

The protein localises to the membrane. In terms of biological role, may act in meiotic drive. This chain is Wtf element wtf11, found in Schizosaccharomyces pombe (strain 972 / ATCC 24843) (Fission yeast).